Here is a 355-residue protein sequence, read N- to C-terminus: Protein RecA (355 aa).

72–79 (GPESSGKT) contacts ATP.

Belongs to the RecA family.

It localises to the cytoplasm. In terms of biological role, can catalyze the hydrolysis of ATP in the presence of single-stranded DNA, the ATP-dependent uptake of single-stranded DNA by duplex DNA, and the ATP-dependent hybridization of homologous single-stranded DNAs. It interacts with LexA causing its activation and leading to its autocatalytic cleavage. The chain is Protein RecA from Wolbachia sp. subsp. Brugia malayi (strain TRS).